Reading from the N-terminus, the 255-residue chain is Protein YIPF7 (255 aa).

Over methionine 1–aspartate 124 the chain is Cytoplasmic. The helical transmembrane segment at leucine 125–valine 145 threads the bilayer. Residue glutamine 146 is a topological domain, lumenal. Residues phenylalanine 147–leucine 167 form a helical membrane-spanning segment. At methionine 168–serine 180 the chain is on the cytoplasmic side. The chain crosses the membrane as a helical span at residues valine 181–leucine 201. The Lumenal segment spans residues glutamine 202 to threonine 204. Residues phenylalanine 205 to phenylalanine 225 form a helical membrane-spanning segment. The Cytoplasmic portion of the chain corresponds to threonine 226–glutamine 234. Residues glutamine 235–phenylalanine 255 form a helical membrane-spanning segment.

It belongs to the YIP1 family.

It is found in the endoplasmic reticulum membrane. Its subcellular location is the golgi apparatus. The protein resides in the cis-Golgi network membrane. The protein localises to the trans-Golgi network membrane. The chain is Protein YIPF7 (YIPF7) from Bos taurus (Bovine).